The chain runs to 147 residues: Large ribosomal subunit protein uL16 (147 aa).

It belongs to the universal ribosomal protein uL16 family. In terms of assembly, part of the 50S ribosomal subunit.

Functionally, binds 23S rRNA and is also seen to make contacts with the A and possibly P site tRNAs. The polypeptide is Large ribosomal subunit protein uL16 (Clostridium novyi (strain NT)).